Here is a 595-residue protein sequence, read N- to C-terminus: Cardiolipin synthase (CMP-forming) / mitochondrial hydrolase fusion protein (595 aa).

Residues methionine 1–lysine 24 constitute a mitochondrion transit peptide. Transmembrane regions (helical) follow at residues alanine 538–alanine 560 and leucine 564–phenylalanine 586.

In the N-terminal section; belongs to the HAD-like hydrolase superfamily. The protein in the C-terminal section; belongs to the CDP-alcohol phosphatidyltransferase class-I family. Requires Mg(2+) as cofactor. Post-translationally, proteolytically cleaved, presumably during its import into the mitochondrion by mitochondrial processing peptidase.

It is found in the mitochondrion. Its subcellular location is the mitochondrion inner membrane. The catalysed reaction is a CDP-1,2-diacyl-sn-glycerol + a 1,2-diacyl-sn-glycero-3-phospho-(1'-sn-glycerol) = a cardiolipin + CMP + H(+). Its function is as follows. Catalyzes the synthesis of cardiolipin (CL) (diphosphatidylglycerol) by specifically transferring a phosphatidyl group from CDP-diacylglycerol to phosphatidylglycerol (PG). CL is a key phospholipid in mitochondrial membranes and plays important roles in maintaining the functional integrity and dynamics of mitochondria under both optimal and stress conditions. In terms of biological role, activity is dispensable for viability. This is Cardiolipin synthase (CMP-forming) / mitochondrial hydrolase fusion protein from Schizosaccharomyces pombe (strain 972 / ATCC 24843) (Fission yeast).